The primary structure comprises 308 residues: Ectoine dioxygenase (308 aa).

L-ectoine is bound at residue Gln131. Residue Lys137 participates in 2-oxoglutarate binding. His148, Asp150, and His249 together coordinate Fe cation.

Belongs to the PhyH family. EctD subfamily. In terms of assembly, homodimer. The cofactor is Fe(2+).

The catalysed reaction is L-ectoine + 2-oxoglutarate + O2 = 5-hydroxyectoine + succinate + CO2. In terms of biological role, involved in the biosynthesis of 5-hydroxyectoine, called compatible solute, which helps organisms to survive extreme osmotic stress by acting as a highly soluble organic osmolyte. Catalyzes the 2-oxoglutarate-dependent selective hydroxylation of L-ectoine to yield (4S,5S)-5-hydroxyectoine. This Bordetella bronchiseptica (strain ATCC BAA-588 / NCTC 13252 / RB50) (Alcaligenes bronchisepticus) protein is Ectoine dioxygenase.